We begin with the raw amino-acid sequence, 548 residues long: Chaperonin GroEL (548 aa).

ATP is bound by residues 30–33, K51, 87–91, G415, and D495; these read TLGP and DGTTT.

Belongs to the chaperonin (HSP60) family. In terms of assembly, forms a cylinder of 14 subunits composed of two heptameric rings stacked back-to-back. Interacts with the co-chaperonin GroES.

The protein localises to the cytoplasm. It catalyses the reaction ATP + H2O + a folded polypeptide = ADP + phosphate + an unfolded polypeptide.. Its function is as follows. Together with its co-chaperonin GroES, plays an essential role in assisting protein folding. The GroEL-GroES system forms a nano-cage that allows encapsulation of the non-native substrate proteins and provides a physical environment optimized to promote and accelerate protein folding. The sequence is that of Chaperonin GroEL from Idiomarina loihiensis (strain ATCC BAA-735 / DSM 15497 / L2-TR).